The primary structure comprises 970 residues: Protein tweety (970 aa).

At 1 to 47 (MGDYHEFTDQYKVPVIAKLLHALPHYNITFHKINSTFRPNDEIYLES) the chain is on the extracellular side. N-linked (GlcNAc...) asparagine glycans are attached at residues Asn27 and Asn34. The helical transmembrane segment at 48–68 (LGILGSVPAALLIVSLLGLLF) threads the bilayer. Over 69 to 89 (YLMTRCCDRKPRPAHSITSLK) the chain is Cytoplasmic. A helical transmembrane segment spans residues 90-110 (VALSIVTVMCCAAIGLGLYGN). Topologically, residues 111–219 (DDLHNGLLEV…GDQWELIRWP (109 aa)) are extracellular. Residues Asn136, Asn166, and Asn183 are each glycosylated (N-linked (GlcNAc...) asparagine). Residues 220-240 (GTVATLALLLVLCAVLLVGVA) form a helical membrane-spanning segment. Over 241–246 (RHSRCA) the chain is Cytoplasmic. Residues 247 to 267 (LILFSVCGLLAVTGSWLMSGL) form a helical membrane-spanning segment. The Extracellular portion of the chain corresponds to 268–395 (YLSSSVAVGD…RGLCEGGLLG (128 aa)). N-linked (GlcNAc...) asparagine glycosylation occurs at Asn359. Residues 396 to 416 (LVLMLIASFIAAILLTIMVWV) form a helical membrane-spanning segment. Residues 417–970 (DSHTWIYIRK…DESNYAVTEL (554 aa)) lie on the Cytoplasmic side of the membrane. Low complexity predominate over residues 532 to 571 (NAAANMPPTTQAAQQQQQQQAQQQQQQAQQQLGGPQPIYC). Disordered regions lie at residues 532–587 (NAAA…QHPH), 677–763 (RQNS…NESD), and 849–970 (MKAI…VTEL). Residues 572-587 (HHPHQHPHPHPHQHPH) show a composition bias toward basic residues. 3 stretches are compositionally biased toward low complexity: residues 689–700 (HQHPPSLHQQQQ), 707–737 (QQQQ…QQHH), and 745–759 (QHQQ…QQQP). The span at 852-868 (IPPPRIGTPTSPPPPVA) shows a compositional bias: pro residues. Gly residues-rich tracts occupy residues 883-894 (QNGGAVVGGGGA) and 931-945 (NGGG…GGGA). Residues 961 to 970 (DESNYAVTEL) show a composition bias toward polar residues.

It belongs to the tweety family.

It localises to the cell membrane. Functionally, non-essential protein that probably acts as a chloride channel. This chain is Protein tweety (tty), found in Drosophila melanogaster (Fruit fly).